The following is a 328-amino-acid chain: Sterol demethylase protein B (328 aa).

This sequence belongs to the NAD(P)-dependent epimerase/dehydratase family.

It catalyses the reaction a 3beta-hydroxy-4alpha-methylsteroid-4beta-carboxylate + NAD(+) = a 4alpha-methyl-3-oxosteroid + CO2 + NADH. The enzyme catalyses a 3beta-hydroxy-4alpha-methylsteroid-4beta-carboxylate + NADP(+) = a 4alpha-methyl-3-oxosteroid + CO2 + NADPH. The catalysed reaction is 4beta-carboxy-4alpha-methyl-5alpha-cholesta-8,24-dien-3beta-ol + NAD(+) = 3-dehydro-4alpha-methylzymosterol + CO2 + NADH. It carries out the reaction 4beta-carboxy-4alpha-methyl-5alpha-cholesta-8,24-dien-3beta-ol + NADP(+) = 3-dehydro-4alpha-methylzymosterol + CO2 + NADPH. It catalyses the reaction 3-dehydro-4alpha-methylzymosterol + NADPH + H(+) = 4alpha-methylzymosterol + NADP(+). It participates in steroid biosynthesis; sterol biosynthesis. Functionally, participates in the biosynthesis of bacterial sterols. Together with SdmA, removes one methyl group from the C-4 position of 4,4-dimethylated steroid molecules. SdmB catalyzes an oxidative decarboxylation that results in reduction of the 3beta-hydroxy group at the C-3 carbon to an oxo group. It also functions as a ketoreductase that converts the C-3 oxo group back to a hydroxyl group after C-4 demethylation. This chain is Sterol demethylase protein B, found in Methylococcus capsulatus (strain ATCC 33009 / NCIMB 11132 / Bath).